A 366-amino-acid polypeptide reads, in one-letter code: Class I histocompatibility antigen, Gogo-C*0202 alpha chain (366 aa).

The first 24 residues, 1–24 (MRVMAPRTLILLLSGALALTETWA), serve as a signal peptide directing secretion. The interval 25–114 (GSHSMRYFYT…LRGYYNQSED (90 aa)) is alpha-1. Residues 25 to 308 (GSHSMRYFYT…EPSSQPTIPI (284 aa)) are Extracellular-facing. Residue N110 is glycosylated (N-linked (GlcNAc...) asparagine). Positions 115-206 (GSHTLQSMYG…ENGKETLQRA (92 aa)) are alpha-2. 2 cysteine pairs are disulfide-bonded: C125–C188 and C227–C283. The alpha-3 stretch occupies residues 207 to 298 (EPPKTHVTHH…GLPEPLTLRW (92 aa)). An Ig-like C1-type domain is found at 209-297 (PKTHVTHHPL…EGLPEPLTLR (89 aa)). A connecting peptide region spans residues 299-308 (EPSSQPTIPI). Residues 309 to 332 (VGIVVGLAVLVVLAVLGAVVTAMM) form a helical membrane-spanning segment. The Cytoplasmic portion of the chain corresponds to 333–366 (CRRKSSGGKGGSCSQAACSNSAQGSDESLITCKA).

Belongs to the MHC class I family. As to quaternary structure, heterodimer of an alpha chain and a beta chain (beta-2-microglobulin).

The protein localises to the membrane. In terms of biological role, involved in the presentation of foreign antigens to the immune system. The chain is Class I histocompatibility antigen, Gogo-C*0202 alpha chain from Gorilla gorilla gorilla (Western lowland gorilla).